The primary structure comprises 439 residues: Glutamine synthetase (439 aa).

Positions Ser12 to Lys93 constitute a GS beta-grasp domain. The GS catalytic domain occupies Pro99 to Leu439. 2 residues coordinate Mg(2+): Glu122 and Glu124. Glu172 contributes to the ATP binding site. Mg(2+) is bound by residues Glu177 and Glu184. Gly229 serves as a coordination point for L-glutamate. His233 provides a ligand contact to Mg(2+). ATP is bound by residues His235 to Ser237 and Ser237. Residues Arg283, Glu289, and Arg301 each coordinate L-glutamate. ATP-binding residues include Arg301, Arg306, and Lys313. A Mg(2+)-binding site is contributed by Glu318. Arg320 is a binding site for L-glutamate.

Belongs to the glutamine synthetase family. In terms of assembly, oligomer of 12 subunits arranged in the form of two hexagons. The cofactor is Mg(2+).

It is found in the cytoplasm. It catalyses the reaction L-glutamate + NH4(+) + ATP = L-glutamine + ADP + phosphate + H(+). Probably involved in nitrogen metabolism via ammonium assimilation. Catalyzes the ATP-dependent biosynthesis of glutamine from glutamate and ammonia. The sequence is that of Glutamine synthetase from Pyrococcus woesei.